The chain runs to 298 residues: uncharacterized protein (298 aa).

The segment covering 1–17 (MLTKSAENKRNRKDDSM) has biased composition (basic and acidic residues). The interval 1–22 (MLTKSAENKRNRKDDSMRPGQQ) is disordered. Residues 167–227 (NKELTGTVYR…EDGSVNLSLL (61 aa)) enclose the S1 motif domain.

This is an uncharacterized protein from Bacillus subtilis (strain 168).